Consider the following 440-residue polypeptide: 23S rRNA (uracil(1939)-C(5))-methyltransferase RlmD (440 aa).

Positions 6 to 64 (PIHNAQPEQVFIESLDTEGRGIARVEGKVLFVDGALPGERVWARRTQNHKSFDRAELLQ) constitute a TRAM domain. Cys77, Cys83, Cys86, and Cys164 together coordinate [4Fe-4S] cluster. Residues Gln273, Phe302, Asn307, Glu323, Asp351, and Asp372 each coordinate S-adenosyl-L-methionine. Cys397 acts as the Nucleophile in catalysis.

This sequence belongs to the class I-like SAM-binding methyltransferase superfamily. RNA M5U methyltransferase family. RlmD subfamily.

The catalysed reaction is uridine(1939) in 23S rRNA + S-adenosyl-L-methionine = 5-methyluridine(1939) in 23S rRNA + S-adenosyl-L-homocysteine + H(+). Its function is as follows. Catalyzes the formation of 5-methyl-uridine at position 1939 (m5U1939) in 23S rRNA. In Acidithiobacillus ferrooxidans (strain ATCC 23270 / DSM 14882 / CIP 104768 / NCIMB 8455) (Ferrobacillus ferrooxidans (strain ATCC 23270)), this protein is 23S rRNA (uracil(1939)-C(5))-methyltransferase RlmD.